Reading from the N-terminus, the 210-residue chain is dTTP/UTP pyrophosphatase (210 aa).

Catalysis depends on Asp85, which acts as the Proton acceptor.

Belongs to the Maf family. YhdE subfamily. A divalent metal cation serves as cofactor.

Its subcellular location is the cytoplasm. It catalyses the reaction dTTP + H2O = dTMP + diphosphate + H(+). The enzyme catalyses UTP + H2O = UMP + diphosphate + H(+). Nucleoside triphosphate pyrophosphatase that hydrolyzes dTTP and UTP. May have a dual role in cell division arrest and in preventing the incorporation of modified nucleotides into cellular nucleic acids. This Saccharophagus degradans (strain 2-40 / ATCC 43961 / DSM 17024) protein is dTTP/UTP pyrophosphatase.